The following is a 166-amino-acid chain: Endoribonuclease YbeY (166 aa).

Zn(2+) contacts are provided by H125, H129, and H135.

Belongs to the endoribonuclease YbeY family. Zn(2+) is required as a cofactor.

The protein localises to the cytoplasm. Its function is as follows. Single strand-specific metallo-endoribonuclease involved in late-stage 70S ribosome quality control and in maturation of the 3' terminus of the 16S rRNA. This chain is Endoribonuclease YbeY, found in Alkalilimnicola ehrlichii (strain ATCC BAA-1101 / DSM 17681 / MLHE-1).